Here is a 256-residue protein sequence, read N- to C-terminus: Protein crossbronx-like (256 aa).

One can recognise a UBC core domain in the interval 17–179; the sequence is NQGYKVLAEY…AKVSILWSCQ (163 aa).

It belongs to the ubiquitin-conjugating enzyme family. FTS subfamily.

The protein is Protein crossbronx-like of Drosophila virilis (Fruit fly).